The following is a 133-amino-acid chain: Large ribosomal subunit protein eL14 (133 aa).

It belongs to the eukaryotic ribosomal protein eL14 family.

The polypeptide is Large ribosomal subunit protein eL14 (RPL14) (Griffithsia japonica (Red alga)).